We begin with the raw amino-acid sequence, 350 residues long: MNTFAEVQKLYREYYNFAIKNNILEIPEGIEYREFGYGYLKKVDNRNLSFKNEREYKDWVLKNAPMHFYKSLAYMLYPNKSGGASKKGIFRRELAFDIDVHKTKKCKHEDDWICKHCLEEAKNQAIYLIEEFLIPDFGLNEEDLKIVFSGNRGYHIYIKPRDEKIRDIIESYSKEDRRFLMDYILGKNLNLNSVGSGWRRRLIKAIKERDKRISTKKLENEKNWKKVIENLKSKNKIYNIIEETKNKIELDEKVMDDDIRLLRVINSLHGYTGFIVKPLSGLDELRRFNPLEDAIFKDFENKVYEVNIFDDRKFEIEICGKKYNNKSKKITASALLYLFGHNIKFELLKS.

Active-site residues include Asp97, Asp99, and Asp251.

This sequence belongs to the eukaryotic-type primase small subunit family. In terms of assembly, heterodimer of a small subunit (PriS) and a large subunit (PriL). Requires Mg(2+) as cofactor. The cofactor is Mn(2+). It depends on Zn(2+) as a cofactor.

Functionally, catalytic subunit of DNA primase, an RNA polymerase that catalyzes the synthesis of short RNA molecules used as primers for DNA polymerase during DNA replication. The small subunit contains the primase catalytic core and has DNA synthesis activity on its own. Binding to the large subunit stabilizes and modulates the activity, increasing the rate of DNA synthesis while decreasing the length of the DNA fragments, and conferring RNA synthesis capability. The DNA polymerase activity may enable DNA primase to also catalyze primer extension after primer synthesis. May also play a role in DNA repair. This chain is DNA primase small subunit PriS, found in Methanocaldococcus jannaschii (strain ATCC 43067 / DSM 2661 / JAL-1 / JCM 10045 / NBRC 100440) (Methanococcus jannaschii).